Reading from the N-terminus, the 166-residue chain is uncharacterized protein (166 aa).

This is an uncharacterized protein from Acidianus hospitalis (AFV-1).